We begin with the raw amino-acid sequence, 436 residues long: Hydrogenobyrinate a,c-diamide synthase (436 aa).

The 192-residue stretch at Arg244–Ala435 folds into the GATase cobBQ-type domain. Cys327 serves as the catalytic Nucleophile.

The protein belongs to the CobB/CbiA family. The cofactor is Mg(2+).

It carries out the reaction hydrogenobyrinate + 2 L-glutamine + 2 ATP + 2 H2O = hydrogenobyrinate a,c-diamide + 2 L-glutamate + 2 ADP + 2 phosphate + 2 H(+). Its pathway is cofactor biosynthesis; adenosylcobalamin biosynthesis; cob(II)yrinate a,c-diamide from precorrin-2 (aerobic route): step 9/10. Functionally, catalyzes the ATP-dependent amidation of the two carboxylate groups at positions a and c of hydrogenobyrinate, using either L-glutamine or ammonia as the nitrogen source. This chain is Hydrogenobyrinate a,c-diamide synthase, found in Brucella suis biovar 1 (strain 1330).